Reading from the N-terminus, the 342-residue chain is Ribosomal RNA small subunit methyltransferase H (342 aa).

Residues 36–38 (GGH), D56, F82, D100, and Q107 contribute to the S-adenosyl-L-methionine site. Residues 309–342 (ENRESGMGKGHGAAASRFPTPDSRFPTSPNGDAP) form a disordered region. Polar residues predominate over residues 333-342 (FPTSPNGDAP).

The protein belongs to the methyltransferase superfamily. RsmH family.

Its subcellular location is the cytoplasm. The catalysed reaction is cytidine(1402) in 16S rRNA + S-adenosyl-L-methionine = N(4)-methylcytidine(1402) in 16S rRNA + S-adenosyl-L-homocysteine + H(+). Its function is as follows. Specifically methylates the N4 position of cytidine in position 1402 (C1402) of 16S rRNA. This Xanthomonas campestris pv. campestris (strain 8004) protein is Ribosomal RNA small subunit methyltransferase H.